The sequence spans 1123 residues: Ubiquitin carboxyl-terminal hydrolase 43 (1123 aa).

A disordered region spans residues 1 to 102 (MDLGPGDAAG…DGARPPGAQG (102 aa)). Positions 17 to 28 (RPRRRRSLRRLF) are enriched in basic residues. Residues 29–39 (SRFLLALGSRS) are compositionally biased toward low complexity. Residues 101-710 (QGLKNHGNTC…GAYILFYQKR (610 aa)) form the USP domain. C110 serves as the catalytic Nucleophile. Residues 202 to 221 (EGSSRGPVSEKLPPEATKTS) form a disordered region. The active-site Proton acceptor is H668. R746 is modified (asymmetric dimethylarginine). 4 disordered regions span residues 795–826 (ISMK…EKPP), 854–886 (TGTA…IERG), 959–1049 (FQMG…RIPE), and 1068–1099 (SSLR…QASY). A Phosphoserine modification is found at S969. Residues 979-990 (KDSRRGTSELDR) are compositionally biased toward basic and acidic residues. Residues 1016–1027 (VSPQVPPVSLVS) are compositionally biased toward low complexity. S1041 is subject to Phosphoserine.

Belongs to the peptidase C19 family. As to expression, expressed in brain, aorta and lung at low levels.

The enzyme catalyses Thiol-dependent hydrolysis of ester, thioester, amide, peptide and isopeptide bonds formed by the C-terminal Gly of ubiquitin (a 76-residue protein attached to proteins as an intracellular targeting signal).. May recognize and hydrolyze the peptide bond at the C-terminal Gly of ubiquitin. Involved in the processing of poly-ubiquitin precursors as well as that of ubiquitinated proteins. This chain is Ubiquitin carboxyl-terminal hydrolase 43 (USP43), found in Homo sapiens (Human).